The primary structure comprises 270 residues: MESLSLKFIEPYWFKFVDYYGEDFLITYGTFIAHEVFYFGSFIPFFLCDFMPFLQKYKIQPTKKNEWKTQFNCIFKVLMTHIFVQLPMMYIFDPAIKAIGLSARAPLPSIPYLIFTIACCFLIEDFYFYWVHRALHHGFWYKHIHKVHHDHAAPFGMTAEYAHPLETVILGVGTVIGPFLFSRDLFTLWVWLGTRLFQTVECHSGYDFPWNPTKLIPFWGGSHFHDFHHETFVGNYSSTFTYLDKIFGTSDKYYSRKQIRDSKLAAGKSE.

Helical transmembrane passes span 31 to 51 (FIAHEVFYFGSFIPFFLCDFM), 82 to 102 (IFVQLPMMYIFDPAIKAIGLS), and 110 to 130 (IPYLIFTIACCFLIEDFYFYW). A Fatty acid hydroxylase domain is found at 118–249 (ACCFLIEDFY…FTYLDKIFGT (132 aa)). The short motif at 132-136 (HRALH) is the Histidine box-1 element. The Histidine box-2 signature appears at 145–149 (HKVHH). Residues 224–230 (FHDFHHE) carry the Histidine box-3 motif.

The protein belongs to the sterol desaturase family. Requires Fe cation as cofactor.

The protein resides in the endoplasmic reticulum membrane. The enzyme catalyses 4,4-dimethyl-5alpha-cholest-7-en-3beta-ol + 6 Fe(II)-[cytochrome b5] + 3 O2 + 5 H(+) = 4alpha-carboxy-4beta-methyl-5alpha-cholest-7-ene-3beta-ol + 6 Fe(III)-[cytochrome b5] + 4 H2O. It participates in steroid biosynthesis; zymosterol biosynthesis; zymosterol from lanosterol: step 3/6. The polypeptide is Putative methylsterol monooxygenase DDB_G0269788 (Dictyostelium discoideum (Social amoeba)).